Consider the following 512-residue polypeptide: Polyamine aminopropyltransferase (512 aa).

7 helical membrane passes run 19-39 (IVSI…SYIL), 48-68 (LTIS…EKFM), 76-96 (VWIE…MFGI), 108-128 (YLYS…PILI), 151-171 (AGGL…FGMV), 172-192 (KTAF…LWLF), and 199-219 (FIVH…GLFF). The PABS domain maps to 215–450 (AGLFFGEEMA…GNWGFVMASR (236 aa)). The segment at 217–457 (LFFGEEMAFN…ASREEIDLDI (241 aa)) is spermidine synthase. S-methyl-5'-thioadenosine is bound at residue Gln-245. The spermidine site is built by His-275 and Asp-299. S-methyl-5'-thioadenosine-binding positions include Asp-319 and 353–354 (DA). The Proton acceptor role is filled by Asp-371.

The protein belongs to the spermidine/spermine synthase family. Homodimer or homotetramer.

It is found in the cell membrane. The catalysed reaction is S-adenosyl 3-(methylsulfanyl)propylamine + putrescine = S-methyl-5'-thioadenosine + spermidine + H(+). It participates in amine and polyamine biosynthesis; spermidine biosynthesis; spermidine from putrescine: step 1/1. Catalyzes the irreversible transfer of a propylamine group from the amino donor S-adenosylmethioninamine (decarboxy-AdoMet) to putrescine (1,4-diaminobutane) to yield spermidine. This chain is Polyamine aminopropyltransferase, found in Oceanobacillus iheyensis (strain DSM 14371 / CIP 107618 / JCM 11309 / KCTC 3954 / HTE831).